A 454-amino-acid chain; its full sequence is MSTTKVKRRVGKYELGRTIGEGTFAKVKFARDTETGDPVAIKILDKEKVLKHKMVEQIKREISTMKLIKHPNVVRIYEVMGSKTNIYIVLEYVTGGELFDTIVNHGRMREDEARRYFQQLINAVDYCHSRGVYHRDLKPENLLLDSYGNLKVSDFGLSALSQQIKDDGLLHTTCGTPNYVAPEVLEDQGYDGAMADLWSCGVILFVLLAGYLPFEDSNLMTLYKKISNAEFTFPPWTSFPAKRLLTRILDPNPMTRITIPEILEDEWFKKGYKRPEFDEKYDTTLDDVDAVFNDSEEHHVTEKKEEPEALNAFELISMSAGLNLGNLFDSEQEFKRETRFTSKCPPKEIVRKIEEAAKPLGFDVQKKNYKICSPCLTTICMNIPFKLRLEKVKAGRKGNLNVATEILQVAPSLHMVEVRKAKGDTLEFHKFYKNLSRTLKDVVWKSDDLQNQLS.

The Protein kinase domain occupies 13 to 268 (YELGRTIGEG…IPEILEDEWF (256 aa)). ATP-binding positions include 19–27 (IGEGTFAKV) and Lys42. Asp136 (proton acceptor) is an active-site residue. The interval 154–183 (DFGLSALSQQIKDDGLLHTTCGTPNYVAPE) is activation loop. Residues 305–329 (EEPEALNAFELISMSAGLNLGNLFD) enclose the NAF domain. A PPI region spans residues 335 to 364 (KRETRFTSKCPPKEIVRKIEEAAKPLGFDV).

Belongs to the protein kinase superfamily. CAMK Ser/Thr protein kinase family. SNF1 subfamily. Mn(2+) is required as a cofactor.

It carries out the reaction L-seryl-[protein] + ATP = O-phospho-L-seryl-[protein] + ADP + H(+). The enzyme catalyses L-threonyl-[protein] + ATP = O-phospho-L-threonyl-[protein] + ADP + H(+). CIPK serine-threonine protein kinases interact with CBL proteins. Binding of a CBL protein to the regulatory NAF domain of CIPK protein lead to the activation of the kinase in a calcium-dependent manner. This is CBL-interacting protein kinase 33 (CIPK33) from Oryza sativa subsp. japonica (Rice).